The chain runs to 339 residues: 4-dimethylallyltryptophan N-methyltransferase easF (339 aa).

The protein belongs to the methyltransferase superfamily. Homodimer.

The catalysed reaction is 4-(3-methylbut-2-enyl)-L-tryptophan + S-adenosyl-L-methionine = 4-(3-methylbut-2-enyl)-L-abrine + S-adenosyl-L-homocysteine + H(+). It participates in alkaloid biosynthesis; ergot alkaloid biosynthesis. Its function is as follows. 4-dimethylallyltryptophan N-methyltransferase; part of the gene cluster that mediates the biosynthesis of fumiclavanine C, a fungal ergot alkaloid. DmaW catalyzes the first step of ergot alkaloid biosynthesis by condensing dimethylallyl diphosphate (DMAP) and tryptophan to form 4-dimethylallyl-L-tryptophan. The second step is catalyzed by the methyltransferase easF that methylates 4-dimethylallyl-L-tryptophan in the presence of S-adenosyl-L-methionine, resulting in the formation of 4-dimethylallyl-L-abrine. The catalase easC and the FAD-dependent oxidoreductase easE then transform 4-dimethylallyl-L-abrine to chanoclavine-I which is further oxidized by EasD in the presence of NAD(+), resulting in the formation of chanoclavine-I aldehyde. EasA reduces chanoclavine-I aldehyde to dihydrochanoclavine-I aldehyde that spontaneously dehydrates to form 6,8-dimethyl-6,7-didehydroergoline. EasG then catalyzes the reduction of 6,8-dimethyl-6,7-didehydroergoline to form festuclavine. Hydrolysis of festuclavine by easM then leads to the formation of fumigaclavine B which is in turn acetylated by easN to fumigaclavine A. Finally, easL catalyzes the conversion of fumigaclavine A into fumigaclavine C by attaching a dimethylallyl moiety to C-2 of the indole nucleus. This chain is 4-dimethylallyltryptophan N-methyltransferase easF, found in Aspergillus fumigatus (strain ATCC MYA-4609 / CBS 101355 / FGSC A1100 / Af293) (Neosartorya fumigata).